The primary structure comprises 349 residues: Sexual stage-specific protein G37 (349 aa).

An N-terminal signal peptide occupies residues 1–18 (MKLYLVTFLFFVIYKNKT). Topologically, residues 19-91 (FVDCVTKKQD…INQVSNNIMR (73 aa)) are extracellular. Residues 92 to 112 (VYISLLSLFLFPYFSYIGIFG) form a helical membrane-spanning segment. The Cytoplasmic portion of the chain corresponds to 113–117 (HSRNK). The chain crosses the membrane as a helical span at residues 118–138 (ANLTLSSLLAYFALLVSFFLF). Over 139 to 140 (NG) the chain is Extracellular. The helical transmembrane segment at 141–161 (ILNIGFVTSLPLVVAVLIFIL) threads the bilayer. The Cytoplasmic portion of the chain corresponds to 162–176 (GVSDCEINFLYKYTR). The chain crosses the membrane as a helical span at residues 177–197 (YIFCFIISKLIYDVVTYISKD). Residues 198 to 218 (GANIFDYGFSGHIYMNLLRGK) are Extracellular-facing. The helical transmembrane segment at 219–239 (YYIVLKLIHLIILSLISLIII) threads the bilayer. Over 240–262 (KICPKIFSNNHLKSPISITFDKY) the chain is Cytoplasmic. The helical transmembrane segment at 263–283 (IISFLCSLPIATAISQVFYLL) threads the bilayer. Topologically, residues 284–305 (SKTINPIDPSIFFMIPSSINFS) are extracellular. A helical membrane pass occupies residues 306–326 (STGTIFSLSIWILMSYLMTFL). The Cytoplasmic segment spans residues 327–349 (RNKVEADFNNILNKIPNNLPDFI).

It is found in the cell membrane. Involved in the development of male gametocytes. The protein is Sexual stage-specific protein G37 of Plasmodium berghei (strain Anka).